We begin with the raw amino-acid sequence, 172 residues long: 3-hydroxydecanoyl-[acyl-carrier-protein] dehydratase (172 aa).

Residue His70 is part of the active site.

It belongs to the thioester dehydratase family. FabA subfamily. In terms of assembly, homodimer.

It localises to the cytoplasm. It catalyses the reaction a (3R)-hydroxyacyl-[ACP] = a (2E)-enoyl-[ACP] + H2O. It carries out the reaction (3R)-hydroxydecanoyl-[ACP] = (2E)-decenoyl-[ACP] + H2O. The enzyme catalyses (2E)-decenoyl-[ACP] = (3Z)-decenoyl-[ACP]. The protein operates within lipid metabolism; fatty acid biosynthesis. In terms of biological role, necessary for the introduction of cis unsaturation into fatty acids. Catalyzes the dehydration of (3R)-3-hydroxydecanoyl-ACP to E-(2)-decenoyl-ACP and then its isomerization to Z-(3)-decenoyl-ACP. Can catalyze the dehydratase reaction for beta-hydroxyacyl-ACPs with saturated chain lengths up to 16:0, being most active on intermediate chain length. The chain is 3-hydroxydecanoyl-[acyl-carrier-protein] dehydratase from Xylella fastidiosa (strain M23).